The primary structure comprises 473 residues: Lactate utilization protein B (473 aa).

2 consecutive 4Fe-4S ferredoxin-type domains span residues 303-333 (GTAF…GHSY) and 352-381 (YDDY…LHEL). Residues cysteine 312, cysteine 315, cysteine 318, cysteine 322, cysteine 365, cysteine 368, and cysteine 372 each contribute to the [4Fe-4S] cluster site.

This sequence belongs to the LutB/YkgF family.

Is involved in L-lactate degradation and allows cells to grow with lactate as the sole carbon source. Has probably a role as an electron transporter during oxidation of L-lactate. The chain is Lactate utilization protein B from Bacillus pumilus (strain SAFR-032).